We begin with the raw amino-acid sequence, 252 residues long: 1-(5-phosphoribosyl)-5-[(5-phosphoribosylamino)methylideneamino] imidazole-4-carboxamide isomerase (252 aa).

The active-site Proton acceptor is the aspartate 10. The active-site Proton donor is the aspartate 129.

It belongs to the HisA/HisF family.

It localises to the cytoplasm. The catalysed reaction is 1-(5-phospho-beta-D-ribosyl)-5-[(5-phospho-beta-D-ribosylamino)methylideneamino]imidazole-4-carboxamide = 5-[(5-phospho-1-deoxy-D-ribulos-1-ylimino)methylamino]-1-(5-phospho-beta-D-ribosyl)imidazole-4-carboxamide. It participates in amino-acid biosynthesis; L-histidine biosynthesis; L-histidine from 5-phospho-alpha-D-ribose 1-diphosphate: step 4/9. The chain is 1-(5-phosphoribosyl)-5-[(5-phosphoribosylamino)methylideneamino] imidazole-4-carboxamide isomerase from Frankia casuarinae (strain DSM 45818 / CECT 9043 / HFP020203 / CcI3).